We begin with the raw amino-acid sequence, 152 residues long: Atypical leghemoglobin 2-1 (152 aa).

The Globin domain occupies 3–152 (TFSEEQEALV…LAGVIKKGMS (150 aa)). Nitrated tyrosine is present on tyrosine 31. Residue serine 46 coordinates heme b. The residue at position 46 (serine 46) is a Phosphoserine. An O2-binding site is contributed by histidine 64. Heme b-binding residues include lysine 67, histidine 99, and arginine 102. Tyrosine 140 carries the post-translational modification Nitrated tyrosine.

Belongs to the plant globin family. In terms of assembly, monomer. Post-translationally, nitrated in effective nodules and particularly in hypoxic conditions; this mechanism may play a protective role in the symbiosis by buffering toxic peroxynitrite NO(2)(-). Nitration level decrease during nodule senescence. Phosphorylation at Ser-46 disrupts the molecular environment of its porphyrin ring oxygen binding pocket, thus leading to a reduced oxygen consumption and to the delivery of oxygen O(2) to symbiosomes. As to expression, mainly expressed in leaves and, at low levels, in roots of non-nodulated plants. However, accumulates also in nodules and roots, and, to a lower extent, in leaves, stems, flowers and fruits, in nodulated plants.

In terms of biological role, atypical leghemoglobin that reversibly binds oxygen O(2) through a pentacoordinated heme iron. In nodules, facilitates the diffusion of oxygen to the bacteroids while preventing the bacterial nitrogenase from being inactivated by buffering dioxygen, nitric oxide and carbon monoxide. This role is essential for symbiotic nitrogen fixation (SNF). Seems not restricted to symbiotic nitrogen fixation and root nodules formation, but also contributes to general plant development and metabolism. The protein is Atypical leghemoglobin 2-1 of Lotus japonicus (Lotus corniculatus var. japonicus).